Here is a 361-residue protein sequence, read N- to C-terminus: Free fatty acid receptor 4 (361 aa).

Topologically, residues 1-45 (MSPECARAAGDAPLRSLEQANRTRFPFFSDVKGDHRLVLAAVETT) are extracellular. N-linked (GlcNAc...) asparagine glycosylation is present at asparagine 21. A helical membrane pass occupies residues 46-66 (VLVLIFAVSLLGNVCALVLVA). At 67 to 77 (RRRRRGATACL) the chain is on the cytoplasmic side. A helical transmembrane segment spans residues 78-98 (VLNLFCADLLFISAIPLVLAV). Over 99 to 112 (RWTEAWLLGPVACH) the chain is Extracellular. The cysteines at positions 111 and 194 are disulfide-linked. The helical transmembrane segment at 113–133 (LLFYVMTLSGSVTILTLAAVS) threads the bilayer. Over 134-156 (LERMVCIVHLQRGVRGPGRRARA) the chain is Cytoplasmic. The helical transmembrane segment at 157–177 (VLLALIWGYSAVAALPLCVFF) threads the bilayer. Residues 178–204 (RVVPQRLPGADQEISICTLIWPTIPGE) are Extracellular-facing. Residues 205 to 225 (ISWDVSFVTLNFLVPGLVIVI) traverse the membrane as a helical segment. Over 226-268 (SYSKILQITKASRKRLTVSLAYSESHQIRVSQQDFRLFRTLFL) the chain is Cytoplasmic. The chain crosses the membrane as a helical span at residues 269–289 (LMVSFFIMWSPIIITILLILI). Residues 290-295 (QNFKQD) lie on the Extracellular side of the membrane. Residues 296-316 (LVIWPSLFFWVVAFTFANSAL) traverse the membrane as a helical segment. The Cytoplasmic segment spans residues 317-361 (NPILYNMTLCRNEWKKIFCCFWFPEKGAILTDTSVKRNDLSIISG). Phosphothreonine is present on residues threonine 347 and threonine 349. A phosphoserine mark is found at serine 350, serine 357, and serine 360.

Belongs to the G-protein coupled receptor 1 family. As to quaternary structure, interacts (via C-terminus) with ARRB2 following LCFAs stimulation. Phosphorylated at two clusters of Ser and Thr residues located in the intracellular C-terminus, a prerequisite for FFAR4 internalization via an ARRB2-dependent pathway. As to expression, the predominant isoform in human tissues. Expressed in adipose tissue, pancreatic islets, lung and brain. Expressed in alpha cells of pancreatic islets. Expressed in primary cilia of perivascular preadipocytes of white adipose tissue (at protein level). In terms of tissue distribution, abundant expression in the intestinal tract. Expressed in colonic intraepithelial neuroendocrine cells.

It is found in the cell membrane. Its subcellular location is the endosome membrane. It localises to the lysosome membrane. The protein resides in the cell projection. The protein localises to the cilium membrane. G-protein-coupled receptor for long-chain fatty acids (LCFAs) with a major role in adipogenesis, energy metabolism and inflammation. Signals via G-protein and beta-arrestin pathways. LCFAs sensing initiates activation of phosphoinositidase C-linked G proteins GNAQ and GNA11 (G(q)/G(11)), inducing a variety of cellular responses via second messenger pathways such as intracellular calcium mobilization, modulation of cyclic adenosine monophosphate (cAMP) production, and mitogen-activated protein kinases (MAPKs). After LCFAs binding, associates with beta-arrestin ARRB2 that acts as an adapter protein coupling the receptor to specific downstream signaling pathways, as well as mediating receptor endocytosis. In response to dietary fats, plays an important role in the regulation of adipocyte proliferation and differentiation. Acts as a receptor for omega-3 polyunsaturated fatty acids (PUFAs) at primary cilium of perivascular preadipocytes, initiating an adipogenic program via cAMP and CTCF-dependent chromatin remodeling that ultimately results in transcriptional activation of adipogenic genes and cell cycle entry. Induces differentiation of brown adipocytes probably via autocrine and endocrine functions of FGF21 hormone. Activates brown adipocytes by initiating intracellular calcium signaling that leads to mitochondrial depolarization and fission, and overall increased mitochondrial respiration. Consequently stimulates fatty acid uptake and oxidation in mitochondria together with UCP1-mediated thermogenic respiration, eventually reducing fat mass. Regulates bi-potential differentiation of bone marrow mesenchymal stem cells toward osteoblasts or adipocytes likely by up-regulating distinct integrins. In response to dietary fats regulates hormone secretion and appetite. Stimulates GIP and GLP1 secretion from enteroendocrine cells as well as GCG secretion in pancreatic alpha cells, thereby playing a role in the regulation of blood glucose levels. Negatively regulates glucose-induced SST secretion in pancreatic delta cells. Mediates LCFAs inhibition of GHRL secretion, an appetite-controlling hormone. In taste buds, contributes to sensing of dietary fatty acids by the gustatory system. During the inflammatory response, promotes anti-inflammatory M2 macrophage differentiation in adipose tissue. Mediates the anti-inflammatory effects of omega-3 PUFAs via inhibition of NLRP3 inflammasome activation. In this pathway, interacts with adapter protein ARRB2 and inhibits the priming step triggered by Toll-like receptors (TLRs) at the level of TAK1 and TAB1. Further inhibits the activation step when ARRB2 directly associates with NLRP3, leading to inhibition of pro-inflammatory cytokine release. Mediates LCFAs anti-apoptotic effects. Its function is as follows. Receptor for LCFAs decoupled from G-protein signaling. May signal through beta-arrestin pathway. After LCFAs binding, associates with beta-arrestin ARRB2 that may act as an adapter protein coupling the receptor to specific downstream signaling pathways, as well as mediating receptor endocytosis. This chain is Free fatty acid receptor 4, found in Homo sapiens (Human).